The chain runs to 62 residues: Small polypeptide DEVIL 17 (62 aa).

The required for DVL/RTFL small polypeptide activity stretch occupies residues 27 to 58 (RRNKGCLAMVKERRSRFYIARRCILMLLCWHK). A helical transmembrane segment spans residues 39–56 (RRSRFYIARRCILMLLCW).

This sequence belongs to the DVL/RTFL small polypeptides family.

The protein resides in the cell membrane. In terms of biological role, small polypeptide acting as a regulatory molecule which coordinates cellular responses required for differentiation, growth and development, probably by restricting polar cell proliferation in lateral organs and coordinating socket cell recruitment and differentiation at trichome sites. The chain is Small polypeptide DEVIL 17 from Arabidopsis thaliana (Mouse-ear cress).